Reading from the N-terminus, the 126-residue chain is Aspartate 1-decarboxylase (126 aa).

The Schiff-base intermediate with substrate; via pyruvic acid role is filled by S25. A Pyruvic acid (Ser) modification is found at S25. Residue T57 participates in substrate binding. The active-site Proton donor is Y58. 73–75 serves as a coordination point for substrate; sequence GGA.

Belongs to the PanD family. In terms of assembly, heterooctamer of four alpha and four beta subunits. Pyruvate is required as a cofactor. Post-translationally, is synthesized initially as an inactive proenzyme, which is activated by self-cleavage at a specific serine bond to produce a beta-subunit with a hydroxyl group at its C-terminus and an alpha-subunit with a pyruvoyl group at its N-terminus.

The protein resides in the cytoplasm. The enzyme catalyses L-aspartate + H(+) = beta-alanine + CO2. It functions in the pathway cofactor biosynthesis; (R)-pantothenate biosynthesis; beta-alanine from L-aspartate: step 1/1. Catalyzes the pyruvoyl-dependent decarboxylation of aspartate to produce beta-alanine. The sequence is that of Aspartate 1-decarboxylase from Stenotrophomonas maltophilia (strain K279a).